The chain runs to 122 residues: MTTFRFCRDCNNMLYPREDKENNRLLFECRTCSYIEEAGSPLVYRHELITNIGETAGVVQDIGSDPTLPRSDRECPKCHSRENVFFQSQQRRKDTSMVLFFVCLACSHIFTSDQKNKRTQFS.

Cys-7, Cys-10, Cys-29, Cys-32, Cys-75, Cys-78, Cys-103, and Cys-106 together coordinate Zn(2+). The C4-type zinc finger occupies 7-32; it reads CRDCNNMLYPREDKENNRLLFECRTC. The segment at 71–111 adopts a TFIIS-type zinc-finger fold; sequence SDRECPKCHSRENVFFQSQQRRKDTSMVLFFVCLACSHIFT.

This sequence belongs to the archaeal RpoM/eukaryotic RPA12/RPB9/RPC11 RNA polymerase family. As to quaternary structure, component of the RNA polymerase II (Pol II) complex consisting of 12 subunits.

It is found in the nucleus. Its subcellular location is the nucleolus. Functionally, DNA-dependent RNA polymerase catalyzes the transcription of DNA into RNA using the four ribonucleoside triphosphates as substrates. Component of RNA polymerase II which synthesizes mRNA precursors and many functional non-coding RNAs. Pol II is the central component of the basal RNA polymerase II transcription machinery. It is composed of mobile elements that move relative to each other. RPB9 is part of the upper jaw surrounding the central large cleft and thought to grab the incoming DNA template. Involved in the regulation of transcription elongation. The sequence is that of DNA-directed RNA polymerase II subunit RPB9 (RPB9) from Candida glabrata (strain ATCC 2001 / BCRC 20586 / JCM 3761 / NBRC 0622 / NRRL Y-65 / CBS 138) (Yeast).